Consider the following 292-residue polypeptide: Porphobilinogen deaminase (292 aa).

Cys235 carries the post-translational modification S-(dipyrrolylmethanemethyl)cysteine.

Belongs to the HMBS family. As to quaternary structure, monomer. The cofactor is dipyrromethane.

It catalyses the reaction 4 porphobilinogen + H2O = hydroxymethylbilane + 4 NH4(+). It participates in porphyrin-containing compound metabolism; protoporphyrin-IX biosynthesis; coproporphyrinogen-III from 5-aminolevulinate: step 2/4. Functionally, tetrapolymerization of the monopyrrole PBG into the hydroxymethylbilane pre-uroporphyrinogen in several discrete steps. This Acetivibrio thermocellus (strain ATCC 27405 / DSM 1237 / JCM 9322 / NBRC 103400 / NCIMB 10682 / NRRL B-4536 / VPI 7372) (Clostridium thermocellum) protein is Porphobilinogen deaminase.